Here is a 151-residue protein sequence, read N- to C-terminus: Neuroglobin (151 aa).

Positions 1–149 (MERPEQELIR…VVQAMSRGWD (149 aa)) constitute a Globin domain. Residues His-64 and His-96 each contribute to the heme b site.

The protein belongs to the globin family. In terms of assembly, monomer. Homodimer and homotetramer; disulfide-linked. Mainly monomeric but also detected as part of homodimers and homotetramers. Interacts with 14-3-3 proteins; regulates the phosphorylation of NGB. Could interact (ferrous form) with G-alpha(i) proteins (GTP-bound form). Phosphorylated during hypoxia by ERK1/ERK2. Phosphorylation regulates the heme pocket hexacoordination preventing the association of His-64 with the heme metal center. Thereby, promotes the access of dioxygen and nitrite to the heme and stimulates the nitrite reductase activity. Phosphorylation during hypoxia is stabilized by 14-3-3 proteins.

It localises to the cytoplasm. The protein localises to the cytosol. Its subcellular location is the mitochondrion matrix. The catalysed reaction is Fe(III)-heme b-[protein] + nitric oxide + H2O = Fe(II)-heme b-[protein] + nitrite + 2 H(+). In terms of biological role, monomeric globin with a bis-histidyl six-coordinate heme-iron atom through which it can bind dioxygen, carbon monoxide and nitric oxide. Could help transport oxygen and increase its availability to the metabolically active neuronal tissues, though its low quantity in tissues as well as its high affinity for dioxygen, which may limit its oxygen-releasing ability, argue against it. The ferrous/deoxygenated form exhibits a nitrite reductase activity and it could produce nitric oxide which in turn inhibits cellular respiration in response to hypoxia. In its ferrous/deoxygenated state, it may also exhibit GDI (Guanine nucleotide Dissociation Inhibitor) activity toward heterotrimeric G-alpha proteins, thereby regulating signal transduction to facilitate neuroprotective responses in the wake of hypoxia and associated oxidative stress. This chain is Neuroglobin, found in Oryctolagus cuniculus (Rabbit).